We begin with the raw amino-acid sequence, 739 residues long: Phosphoribosylformylglycinamidine synthase subunit PurL (739 aa).

Residue H54 is part of the active site. Residues Y57 and K96 each coordinate ATP. Residue E98 participates in Mg(2+) binding. Substrate is bound by residues 99-102 (SHNH) and R121. H100 serves as the catalytic Proton acceptor. D122 is a Mg(2+) binding site. Q245 lines the substrate pocket. D275 is a Mg(2+) binding site. 319-321 (ESQ) contacts substrate. The ATP site is built by D504 and G541. N542 provides a ligand contact to Mg(2+). Substrate is bound at residue S544.

This sequence belongs to the FGAMS family. Monomer. Part of the FGAM synthase complex composed of 1 PurL, 1 PurQ and 2 PurS subunits.

Its subcellular location is the cytoplasm. It catalyses the reaction N(2)-formyl-N(1)-(5-phospho-beta-D-ribosyl)glycinamide + L-glutamine + ATP + H2O = 2-formamido-N(1)-(5-O-phospho-beta-D-ribosyl)acetamidine + L-glutamate + ADP + phosphate + H(+). The protein operates within purine metabolism; IMP biosynthesis via de novo pathway; 5-amino-1-(5-phospho-D-ribosyl)imidazole from N(2)-formyl-N(1)-(5-phospho-D-ribosyl)glycinamide: step 1/2. Functionally, part of the phosphoribosylformylglycinamidine synthase complex involved in the purines biosynthetic pathway. Catalyzes the ATP-dependent conversion of formylglycinamide ribonucleotide (FGAR) and glutamine to yield formylglycinamidine ribonucleotide (FGAM) and glutamate. The FGAM synthase complex is composed of three subunits. PurQ produces an ammonia molecule by converting glutamine to glutamate. PurL transfers the ammonia molecule to FGAR to form FGAM in an ATP-dependent manner. PurS interacts with PurQ and PurL and is thought to assist in the transfer of the ammonia molecule from PurQ to PurL. This Lactococcus lactis subsp. cremoris (strain SK11) protein is Phosphoribosylformylglycinamidine synthase subunit PurL.